The following is an 871-amino-acid chain: Synaptonemal complex protein 1 (871 aa).

The tract at residues 1-40 (MQKLGFPAMKSLDKPRSLSGSANMYSFSNRKPPDSVSSGS) is disordered. Positions 18–40 (LSGSANMYSFSNRKPPDSVSSGS) are enriched in polar residues. Coiled coils occupy residues 58–304 (MRTD…DKKN) and 331–608 (LALD…EESK). Disordered stretches follow at residues 708–741 (VMSD…RSEH) and 778–871 (SVLS…YAFD). Polar residues predominate over residues 719–728 (VNSNKNYSIS). Residues 729–741 (KDSRLGGSKRSEH) show a composition bias toward basic and acidic residues. Residues 831–847 (LTPQSIAKGTGMTSHAR) are compositionally biased toward polar residues.

It is found in the nucleus. Its function is as follows. Required for chromosome synapsis and normal fidelity of crossing over. This is Synaptonemal complex protein 1 (ZYP1A) from Arabidopsis thaliana (Mouse-ear cress).